A 509-amino-acid polypeptide reads, in one-letter code: Maturase K (509 aa).

This sequence belongs to the intron maturase 2 family. MatK subfamily.

Its subcellular location is the plastid. The protein resides in the chloroplast. Usually encoded in the trnK tRNA gene intron. Probably assists in splicing its own and other chloroplast group II introns. The sequence is that of Maturase K from Austrocylindropuntia vestita (Cactus).